Consider the following 352-residue polypeptide: MSNSAVSSADSIKLTEYSHGAGCGCKISPKVLTTILASQLPVFTDPNLLVGNQSRDDAAVYKLNDEIGIISTTDFFMPIVDDPFTFGRIAATNAISDIYAMGGTPMMAIAILGWPVNKLPAEIAQQVVDGGRQACMEAGIMLAGGHSIDAPEPIFGLAVTGQIALTDLKQNDTAKADDRLYLTKPIGIGILTTAQKQKKLKDEDSQIAVNAMCQLNSIGAKIAKIKGVNALTDVTGFGLAGHLLEVCQGAKLTAKLNLDAVPLLPRALDYLAQGCIPGGTHRNYDSYGEHLPTLTDHQKAILCDPQTSGGLLVAVSSEAEAELVALLNAHQIEPICIGSLETPTSTANVVLC.

Cys-23 is a catalytic residue. Residues Lys-26 and 54 to 56 (SRD) each bind ATP. Asp-57 contacts Mg(2+). ATP contacts are provided by residues Asp-74, Asp-97, and 145-147 (GHS). Asp-97 is a Mg(2+) binding site. Asp-233 is a binding site for Mg(2+).

This sequence belongs to the selenophosphate synthase 1 family. Class I subfamily. In terms of assembly, homodimer. The cofactor is Mg(2+).

It carries out the reaction hydrogenselenide + ATP + H2O = selenophosphate + AMP + phosphate + 2 H(+). Its function is as follows. Synthesizes selenophosphate from selenide and ATP. In Shewanella sp. (strain ANA-3), this protein is Selenide, water dikinase.